A 49-amino-acid chain; its full sequence is Fungus-induced-related protein 16 (49 aa).

The polypeptide is Fungus-induced-related protein 16 (fipr-16) (Caenorhabditis elegans).